A 367-amino-acid polypeptide reads, in one-letter code: tRNA-specific 2-thiouridylase MnmA (367 aa).

Residues 12-19 (GMSGGVDS) and Met-38 each bind ATP. The interaction with target base in tRNA stretch occupies residues 98–100 (NPD). The Nucleophile role is filled by Cys-103. A disulfide bridge connects residues Cys-103 and Cys-200. ATP is bound at residue Gly-128. The interaction with tRNA stretch occupies residues 150–152 (KDQ). The active-site Cysteine persulfide intermediate is Cys-200. The segment at 312 to 313 (RY) is interaction with tRNA.

Belongs to the MnmA/TRMU family. As to quaternary structure, interacts with TusE.

The protein resides in the cytoplasm. The catalysed reaction is S-sulfanyl-L-cysteinyl-[protein] + uridine(34) in tRNA + AH2 + ATP = 2-thiouridine(34) in tRNA + L-cysteinyl-[protein] + A + AMP + diphosphate + H(+). Catalyzes the 2-thiolation of uridine at the wobble position (U34) of tRNA(Lys), tRNA(Glu) and tRNA(Gln), leading to the formation of s(2)U34, the first step of tRNA-mnm(5)s(2)U34 synthesis. Sulfur is provided by IscS, via a sulfur-relay system. Binds ATP and its substrate tRNAs. This is tRNA-specific 2-thiouridylase MnmA from Blochmanniella pennsylvanica (strain BPEN).